The following is a 160-amino-acid chain: 2-C-methyl-D-erythritol 2,4-cyclodiphosphate synthase (160 aa).

The a divalent metal cation site is built by Asp-11 and His-13. Residues 11 to 13 and 37 to 38 contribute to the 4-CDP-2-C-methyl-D-erythritol 2-phosphate site; these read DVH and HS. His-45 contacts a divalent metal cation. Residues 59 to 61 and Arg-145 contribute to the 4-CDP-2-C-methyl-D-erythritol 2-phosphate site; that span reads DIG.

It belongs to the IspF family. In terms of assembly, homotrimer. It depends on a divalent metal cation as a cofactor.

The catalysed reaction is 4-CDP-2-C-methyl-D-erythritol 2-phosphate = 2-C-methyl-D-erythritol 2,4-cyclic diphosphate + CMP. Its pathway is isoprenoid biosynthesis; isopentenyl diphosphate biosynthesis via DXP pathway; isopentenyl diphosphate from 1-deoxy-D-xylulose 5-phosphate: step 4/6. Its function is as follows. Involved in the biosynthesis of isopentenyl diphosphate (IPP) and dimethylallyl diphosphate (DMAPP), two major building blocks of isoprenoid compounds. Catalyzes the conversion of 4-diphosphocytidyl-2-C-methyl-D-erythritol 2-phosphate (CDP-ME2P) to 2-C-methyl-D-erythritol 2,4-cyclodiphosphate (ME-CPP) with a corresponding release of cytidine 5-monophosphate (CMP). The polypeptide is 2-C-methyl-D-erythritol 2,4-cyclodiphosphate synthase (Neisseria gonorrhoeae (strain ATCC 700825 / FA 1090)).